The sequence spans 29 residues: Scolopendra 8011.73 Da toxin (29 aa).

In terms of tissue distribution, expressed by the venom gland.

The protein localises to the secreted. This Scolopendra viridicornis nigra (Brazilian giant centipede) protein is Scolopendra 8011.73 Da toxin.